Consider the following 1697-residue polypeptide: Neurexin-3a (1697 aa).

A signal peptide spans 1–23; sequence MNFFRFPVQLQLLISTVLGPCLG. The 175-residue stretch at 24-198 folds into the Laminin G-like 1 domain; the sequence is LEFTGLQGQW…RVRMDIEGIC (175 aa). The Extracellular portion of the chain corresponds to 24–1622; it reads LEFTGLQGQW…EVVRESSSTT (1599 aa). The EGF-like 1 domain occupies 194 to 231; it reads IEGICMENPCENGGTCSVVDGEPLCDCSKTEYVGRFCN. Intrachain disulfides connect cysteine 198/cysteine 209, cysteine 203/cysteine 218, and cysteine 220/cysteine 230. 2 Laminin G-like domains span residues 258-455 and 462-654; these read VATF…VFKC and DPIS…KPSC. The Ca(2+) site is built by aspartate 304, leucine 321, and methionine 389. Disulfide bonds link cysteine 419/cysteine 455, cysteine 625/cysteine 654, cysteine 662/cysteine 673, cysteine 667/cysteine 682, and cysteine 684/cysteine 694. One can recognise an EGF-like 2 domain in the interval 658 to 695; the sequence is SGKQCDSYPCKNKGLCKEGWNRFICDCTGTGYWSRTCE. Laminin G-like domains lie at 700–872 and 886–1061; these read ILSY…IDFC and DPVT…ERGC. 4 disulfides stabilise this stretch: cysteine 1033/cysteine 1061, cysteine 1077/cysteine 1088, cysteine 1082/cysteine 1097, and cysteine 1099/cysteine 1109. Residues 1073–1110 form the EGF-like 3 domain; it reads PSTTCQEDSCANMGICIQQWENYTCDCSMTSYTGTHCN. Residues 1114 to 1314 form the Laminin G-like 6 domain; the sequence is TTYIFGKGGG…NPNIKINGSV (201 aa). Disordered regions lie at residues 1345–1366, 1442–1479, and 1520–1557; these read TMST…TDDM, LSDG…NLPP, and PNKV…KMNH. Residues 1446–1461 show a composition bias toward acidic residues; that stretch reads GSDDCGDDDDDDDDDG. Residues 1527 to 1547 are compositionally biased toward polar residues; the sequence is GRTTTASFSPKLSRSTTTSTP. The chain crosses the membrane as a helical span at residues 1623–1643; sequence GMVVGIVAAAALCILILLYAM. Topologically, residues 1644 to 1697 are cytoplasmic; it reads YKYRNRDEGSYQVDETRNYITNSAQSNGAVMKDKQQSTKSGNKKQKNKDKEYYV. Positions 1665-1697 are disordered; sequence NSAQSNGAVMKDKQQSTKSGNKKQKNKDKEYYV.

Belongs to the neurexin family.

The protein localises to the membrane. Functionally, neuronal cell surface protein that may be involved in cell recognition and cell adhesion. This chain is Neurexin-3a (nrxn3a), found in Danio rerio (Zebrafish).